The following is a 306-amino-acid chain: 26S proteasome regulatory subunit RPN11 (306 aa).

The region spanning Val-27–Gly-162 is the MPN domain. Residues His-109, His-111, and Asp-122 each contribute to the Zn(2+) site. The JAMM motif motif lies at His-109–Asp-122.

Belongs to the peptidase M67A family.

Its function is as follows. Acts as a regulatory subunit of the 26 proteasome which is involved in the ATP-dependent degradation of ubiquitinated proteins. The chain is 26S proteasome regulatory subunit RPN11 (RPN11) from Candida glabrata (strain ATCC 2001 / BCRC 20586 / JCM 3761 / NBRC 0622 / NRRL Y-65 / CBS 138) (Yeast).